We begin with the raw amino-acid sequence, 342 residues long: Farnesyl pyrophosphate synthase 2 (342 aa).

3 residues coordinate isopentenyl diphosphate: Lys47, Arg50, and Gln86. The Mg(2+) site is built by Asp93 and Asp97. Arg102 contributes to the dimethylallyl diphosphate binding site. Arg103 contacts isopentenyl diphosphate. 5 residues coordinate dimethylallyl diphosphate: Lys190, Thr191, Gln229, Lys246, and Lys255.

This sequence belongs to the FPP/GGPP synthase family. Mg(2+) serves as cofactor.

The protein localises to the cytoplasm. It carries out the reaction isopentenyl diphosphate + dimethylallyl diphosphate = (2E)-geranyl diphosphate + diphosphate. It catalyses the reaction isopentenyl diphosphate + (2E)-geranyl diphosphate = (2E,6E)-farnesyl diphosphate + diphosphate. Its pathway is isoprenoid biosynthesis; farnesyl diphosphate biosynthesis; farnesyl diphosphate from geranyl diphosphate and isopentenyl diphosphate: step 1/1. The protein operates within isoprenoid biosynthesis; geranyl diphosphate biosynthesis; geranyl diphosphate from dimethylallyl diphosphate and isopentenyl diphosphate: step 1/1. In terms of biological role, catalyzes the sequential condensation of isopentenyl pyrophosphate with the allylic pyrophosphates, dimethylallyl pyrophosphate, and then with the resultant geranylpyrophosphate to the ultimate product farnesyl pyrophosphate. The polypeptide is Farnesyl pyrophosphate synthase 2 (FPS2) (Lupinus albus (White lupine)).